The sequence spans 535 residues: CTP synthase (535 aa).

The interval 1–267 (MTKYIFVTGG…DKLVCEHMKL (267 aa)) is amidoligase domain. Ser-13 is a binding site for CTP. Ser-13 contributes to the UTP binding site. Residue 14–19 (SLGKGI) participates in ATP binding. Tyr-54 contacts L-glutamine. Asp-71 is an ATP binding site. 2 residues coordinate Mg(2+): Asp-71 and Glu-141. Residues 148–150 (DIE), 188–193 (KTKPTQ), and Lys-224 contribute to the CTP site. Residues 188–193 (KTKPTQ) and Lys-224 each bind UTP. Positions 292–534 (TIGLVGKYVE…IGASVEAANQ (243 aa)) constitute a Glutamine amidotransferase type-1 domain. Residue Gly-354 participates in L-glutamine binding. Cys-381 serves as the catalytic Nucleophile; for glutamine hydrolysis. Residues 382-385 (LGMQ), Glu-405, and Arg-462 contribute to the L-glutamine site. Active-site residues include His-507 and Glu-509.

It belongs to the CTP synthase family. As to quaternary structure, homotetramer. Interacts with BrxC.

It catalyses the reaction UTP + L-glutamine + ATP + H2O = CTP + L-glutamate + ADP + phosphate + 2 H(+). The catalysed reaction is L-glutamine + H2O = L-glutamate + NH4(+). It carries out the reaction UTP + NH4(+) + ATP = CTP + ADP + phosphate + 2 H(+). It participates in pyrimidine metabolism; CTP biosynthesis via de novo pathway; CTP from UDP: step 2/2. With respect to regulation, allosterically activated by GTP, when glutamine is the substrate; GTP has no effect on the reaction when ammonia is the substrate. The allosteric effector GTP functions by stabilizing the protein conformation that binds the tetrahedral intermediate(s) formed during glutamine hydrolysis. Inhibited by the product CTP, via allosteric rather than competitive inhibition. Functionally, catalyzes the ATP-dependent amination of UTP to CTP with either L-glutamine or ammonia as the source of nitrogen. Regulates intracellular CTP levels through interactions with the four ribonucleotide triphosphates. This chain is CTP synthase, found in Bacillus subtilis (strain 168).